Consider the following 432-residue polypeptide: 2-oxoglutarate-dependent dioxygenase AOP2 (432 aa).

The region spanning 281–378 is the Fe2OG dioxygenase domain; sequence SGDDVEANDD…RYTAAIFTCP (98 aa). The Fe cation site is built by His-301, Asp-303, and His-358. Arg-369 contributes to the 2-oxoglutarate binding site.

This sequence belongs to the iron/ascorbate-dependent oxidoreductase family. Fe(2+) serves as cofactor.

Functionally, 2-oxoglutarate-dependent dioxygenase involved in glucosinolates biosynthesis. Catalyzes the conversion of methylsulfinylalkyl glucosinolates to alkenyl glucosinolates. The chain is 2-oxoglutarate-dependent dioxygenase AOP2 (AOP2) from Arabidopsis thaliana (Mouse-ear cress).